Reading from the N-terminus, the 114-residue chain is Vacuolar morphogenesis protein 10 (114 aa).

It is found in the vacuole membrane. Required for vacuolar fusion. Involved in the early steps of the fusion pathway. This chain is Vacuolar morphogenesis protein 10 (VAM10), found in Saccharomyces cerevisiae (strain ATCC 204508 / S288c) (Baker's yeast).